A 548-amino-acid polypeptide reads, in one-letter code: Protein swallow (548 aa).

3 disordered regions span residues 67-109 (AKTC…GRSS), 184-206 (NCQT…SSSF), and 358-428 (FSSV…ELIS). Over residues 79–91 (QEDEDDYDEDVDG) the composition is skewed to acidic residues. The segment covering 189 to 205 (SNSDSNYNSNSNNSSSS) has biased composition (low complexity). A phosphoserine mark is found at Ser362 and Ser368. Residues 388 to 402 (APNNSETSQPSSNDS) show a composition bias toward polar residues. Residues 406 to 420 (VEAHEEERPSSRRQW) are compositionally biased toward basic and acidic residues. A phosphoserine mark is found at Ser463, Ser471, Ser475, Ser483, Ser485, and Ser487.

May be a homo- or heterodimer.

The protein localises to the nucleus. In terms of biological role, has a role in localizing bicoid mRNA at the anterior margin of the oocyte during oogenesis, and a poorly characterized role in nuclear divisions in early embryogenesis. The chain is Protein swallow (swa) from Drosophila melanogaster (Fruit fly).